The sequence spans 147 residues: D-aminoacyl-tRNA deacylase (147 aa).

The Gly-cisPro motif, important for rejection of L-amino acids motif lies at 136 to 137 (GP).

The protein belongs to the DTD family. Homodimer.

The protein localises to the cytoplasm. It carries out the reaction glycyl-tRNA(Ala) + H2O = tRNA(Ala) + glycine + H(+). The enzyme catalyses a D-aminoacyl-tRNA + H2O = a tRNA + a D-alpha-amino acid + H(+). An aminoacyl-tRNA editing enzyme that deacylates mischarged D-aminoacyl-tRNAs. Also deacylates mischarged glycyl-tRNA(Ala), protecting cells against glycine mischarging by AlaRS. Acts via tRNA-based rather than protein-based catalysis; rejects L-amino acids rather than detecting D-amino acids in the active site. By recycling D-aminoacyl-tRNA to D-amino acids and free tRNA molecules, this enzyme counteracts the toxicity associated with the formation of D-aminoacyl-tRNA entities in vivo and helps enforce protein L-homochirality. This chain is D-aminoacyl-tRNA deacylase, found in Streptococcus uberis (strain ATCC BAA-854 / 0140J).